The sequence spans 156 residues: Small ribosomal subunit protein uS7 (156 aa).

This sequence belongs to the universal ribosomal protein uS7 family. As to quaternary structure, part of the 30S ribosomal subunit. Contacts proteins S9 and S11.

Functionally, one of the primary rRNA binding proteins, it binds directly to 16S rRNA where it nucleates assembly of the head domain of the 30S subunit. Is located at the subunit interface close to the decoding center, probably blocks exit of the E-site tRNA. This Proteus mirabilis (strain HI4320) protein is Small ribosomal subunit protein uS7.